We begin with the raw amino-acid sequence, 249 residues long: tRNA pseudouridine synthase A (249 aa).

The Nucleophile role is filled by Asp53. Tyr111 contributes to the substrate binding site.

The protein belongs to the tRNA pseudouridine synthase TruA family. Homodimer.

It carries out the reaction uridine(38/39/40) in tRNA = pseudouridine(38/39/40) in tRNA. Its function is as follows. Formation of pseudouridine at positions 38, 39 and 40 in the anticodon stem and loop of transfer RNAs. In Streptococcus pneumoniae (strain 70585), this protein is tRNA pseudouridine synthase A.